A 91-amino-acid chain; its full sequence is Small ribosomal subunit protein uS19 (91 aa).

A disordered region spans residues 1–32; it reads MPRSIKKGPFIDEHLDRKVQSAQASNSRRPIK. The segment covering 9-19 has biased composition (basic and acidic residues); sequence PFIDEHLDRKV.

This sequence belongs to the universal ribosomal protein uS19 family.

Functionally, protein S19 forms a complex with S13 that binds strongly to the 16S ribosomal RNA. The chain is Small ribosomal subunit protein uS19 from Acidithiobacillus ferrooxidans (strain ATCC 53993 / BNL-5-31) (Leptospirillum ferrooxidans (ATCC 53993)).